The sequence spans 1207 residues: DNA-directed RNA polymerase subunit beta' (1207 aa).

Residues C60, C62, C75, and C78 each contribute to the Zn(2+) site. Residues D450, D452, and D454 each coordinate Mg(2+). Zn(2+) is bound by residues C819, C893, C900, and C903.

It belongs to the RNA polymerase beta' chain family. In terms of assembly, the RNAP catalytic core consists of 2 alpha, 1 beta, 1 beta' and 1 omega subunit. When a sigma factor is associated with the core the holoenzyme is formed, which can initiate transcription. Mg(2+) is required as a cofactor. Requires Zn(2+) as cofactor.

The enzyme catalyses RNA(n) + a ribonucleoside 5'-triphosphate = RNA(n+1) + diphosphate. DNA-dependent RNA polymerase catalyzes the transcription of DNA into RNA using the four ribonucleoside triphosphates as substrates. In Streptococcus pyogenes serotype M12 (strain MGAS2096), this protein is DNA-directed RNA polymerase subunit beta'.